The primary structure comprises 144 residues: Transcriptional regulator SlyA (144 aa).

The region spanning 2-135 (ESPLGSDLSR…LSQMISKLEK (134 aa)) is the HTH marR-type domain. The H-T-H motif DNA-binding region spans 49–72 (QIQLAKAIGIEQPSLVRTLDQLEE).

It belongs to the SlyA family. As to quaternary structure, homodimer.

In terms of biological role, transcription regulator that can specifically activate or repress expression of target genes. This Wigglesworthia glossinidia brevipalpis protein is Transcriptional regulator SlyA.